The chain runs to 265 residues: MGQILGKIMMSHQPQPQEEQSPQRSTSGYPLQEVVDDEVSGPSAPGVDPSPPRRSLGWKRKRECLDESDDEPEKELAPEPEETWVAETLCGLKMKAKRRRVSLVLPEYYEAFNRLLEDPVIKRLLAWDKDLRVSDKYLLAMVIAYFSRAGLPSWQYQRIHFFLALYLANDMEEDDEAPKQNIFYFLYEETRSHIPLLRELWFQLCRYMNPRARKNCSQIALFRKYRFHFFCSMRCRAWVSLEELEEIQAYDPEHWVWARDRAHLS.

Residues 1–80 (MGQILGKIMM…EPEKELAPEP (80 aa)) are disordered. Positions 13–23 (QPQPQEEQSPQ) are enriched in low complexity. Positions 66–80 (DESDDEPEKELAPEP) are enriched in acidic residues.

It belongs to the Speedy/Ringo family.

In Homo sapiens (Human), this protein is Speedy protein E12.